A 597-amino-acid chain; its full sequence is Coronatine-insensitive protein homolog 1b (597 aa).

The F-box domain occupies 22–64; that stretch reads SIPEEALHLVLGYVDDPRDREAVSLVCRRWHRIDALTRKHVTV. Jasmonate contacts are provided by R92, R353, Y391, R414, and R501.

Interacts with TIFY10C/JAZ8 in a coronatine-dependent manner. Interacts with TIFY3/JAZ1, TIFY6A/JAZ3, TIFY6B/JAZ4, TIFY10A/JAZ6, TIFY10B/JAZ7, TIFY11A/JAZ9, TIFY11B/JAZ10, TIFY11C/JAZ11 and TIFY11D/JAZ12 in a coronatine-dependent manner. In terms of tissue distribution, expressed in roots, shoots, leaf sheaths and leaf blades.

Involved in jasmonate (JA) signaling. Required for jasmonate signaling in plant defense responses. Can complement Arabidopsis coi1-1 mutant and restore jasmonate signaling. Component of SCF(COI1) E3 ubiquitin ligase complexes, which may mediate the ubiquitination and subsequent proteasomal degradation of target proteins, including TIFY/JAZ family. This Oryza sativa subsp. japonica (Rice) protein is Coronatine-insensitive protein homolog 1b.